Here is a 604-residue protein sequence, read N- to C-terminus: Kelch-like protein 15 (604 aa).

The 68-residue stretch at 31–98 (LDVTLVIEDH…MYYGTIELSM (68 aa)) folds into the BTB domain. The BACK domain occupies 133–237 (CAEIMRLLDD…TPTSVFEKVK (105 aa)). Kelch repeat units follow at residues 328-379 (FVFL…VIGK), 381-426 (IYAV…VLNN), 428-473 (LFIT…NKSK), 489-542 (KLYV…VLDK), and 544-590 (IMVL…VCNL).

Homodimer. Dimerization does not affect PPP2R5B-binding, but is required for its proteasomal degradation. Interacts with CUL3. Directly interacts with PPP2R5B; this interaction leads to PPP2R5B proteasomal degradation. Interacts with RBBP8/CtIP; this interaction leads to RBBP8 proteasomal degradation. Interacts with PACMP micropeptide; interaction prevents ubiquitination and degradation of RBBP8/CtIP.

It is found in the nucleus. It functions in the pathway protein modification; protein ubiquitination. Substrate-specific adapter for CUL3 E3 ubiquitin-protein ligase complex. Acts as an adapter for CUL3 to target the serine/threonine-protein phosphatase 2A (PP2A) subunit PPP2R5B for ubiquitination and subsequent proteasomal degradation, thus promoting exchange with other regulatory subunits. Acts as an adapter for CUL3 to target the DNA-end resection factor RBBP8/CtIP for ubiquitination and subsequent proteasomal degradation. Through the regulation of RBBP8/CtIP protein turnover, plays a key role in DNA damage response, favoring DNA double-strand repair through error-prone non-homologous end joining (NHEJ) over error-free, RBBP8-mediated homologous recombination (HR). This is Kelch-like protein 15 (KLHL15) from Homo sapiens (Human).